Reading from the N-terminus, the 490-residue chain is Protein nucleotidyltransferase YdiU (490 aa).

Residues glycine 94, glycine 96, arginine 97, lysine 117, aspartate 129, glycine 130, arginine 180, and arginine 187 each contribute to the ATP site. The active-site Proton acceptor is the aspartate 256. Residues asparagine 257 and aspartate 266 each contribute to the Mg(2+) site. Aspartate 266 contacts ATP.

This sequence belongs to the SELO family. Mg(2+) serves as cofactor. Requires Mn(2+) as cofactor.

The catalysed reaction is L-seryl-[protein] + ATP = 3-O-(5'-adenylyl)-L-seryl-[protein] + diphosphate. The enzyme catalyses L-threonyl-[protein] + ATP = 3-O-(5'-adenylyl)-L-threonyl-[protein] + diphosphate. It catalyses the reaction L-tyrosyl-[protein] + ATP = O-(5'-adenylyl)-L-tyrosyl-[protein] + diphosphate. It carries out the reaction L-histidyl-[protein] + UTP = N(tele)-(5'-uridylyl)-L-histidyl-[protein] + diphosphate. The catalysed reaction is L-seryl-[protein] + UTP = O-(5'-uridylyl)-L-seryl-[protein] + diphosphate. The enzyme catalyses L-tyrosyl-[protein] + UTP = O-(5'-uridylyl)-L-tyrosyl-[protein] + diphosphate. Functionally, nucleotidyltransferase involved in the post-translational modification of proteins. It can catalyze the addition of adenosine monophosphate (AMP) or uridine monophosphate (UMP) to a protein, resulting in modifications known as AMPylation and UMPylation. The sequence is that of Protein nucleotidyltransferase YdiU from Clostridium perfringens (strain ATCC 13124 / DSM 756 / JCM 1290 / NCIMB 6125 / NCTC 8237 / Type A).